The chain runs to 589 residues: MATGKGAAASTQEGKSQPFKVTPGPFDPATWLEWSRQWQGTEGNGHAAASGIPGLDALAGVKIAPAQLGDIQQRYMKDFSALWQAMAEGKAEATGPLHDRRFAGDAWRTNLPYRFAAAFYLLNARALTELADAVEADAKTRQRIRFAISQWVDAMSPANFLATNPEAQRLLIESGGESLRAGVRNMMEDLTRGKISQTDESAFEVGRNVAVTEGAVVFENEYFQLLQYKPLTDKVHARPLLMVPPCINKYYILDLQPESSLVRHVVEQGHTVFLVSWRNPDASMAGSTWDDYIEHAAIRAIEVARDISGQDKINVLGFCVGGTIVSTALAVLAARGEHPAASVTLLTTLLDFADTGILDVFVDEGHVQLREATLGGGAGAPCALLRGLELANTFSFLRPNDLVWNYVVDNYLKGNTPVPFDLLFWNGDATNLPGPWYCWYLRHTYLQNELKVPGKLTVCGVPVDLASIDVPTYIYGSREDHIVPWTAAYASTALLANKLRFVLGASGHIAGVINPPAKNKRSHWTNDALPESPQQWLAGAIEHHGSWWPDWTAWLAGQAGAKRAAPANYGNARYRAIEPAPGRYVKAKA.

The tract at residues 1–23 is disordered; the sequence is MATGKGAAASTQEGKSQPFKVTP. C319 is an active-site residue.

This sequence belongs to the PHA/PHB synthase family. Type I PhaC subfamily. Monomer.

Its subcellular location is the cytoplasm. The enzyme catalyses (3R)-3-hydroxybutanoyl-CoA + [(3R)-hydroxybutanoate](n) = [(3R)-hydroxybutanoate](n+1) + CoA. It participates in biopolymer metabolism; poly-(R)-3-hydroxybutanoate biosynthesis. Polymerizes (R)-3-hydroxybutyryl-CoA to create polyhydroxybutyrate (PHB) which consists of thousands of hydroxybutyrate molecules linked end to end. PHB serves as an intracellular energy reserve material when cells grow under conditions of nutrient limitation. This Cupriavidus necator (strain ATCC 17699 / DSM 428 / KCTC 22496 / NCIMB 10442 / H16 / Stanier 337) (Ralstonia eutropha) protein is Poly(3-hydroxyalkanoate) polymerase subunit PhaC.